Reading from the N-terminus, the 776-residue chain is Glucocorticoid receptor (776 aa).

The segment covering Met1 to Ser11 has biased composition (polar residues). Residues Met1–Asn25 form a disordered region. The interval Met1–Phe419 is modulating. A Phosphothreonine modification is found at Thr8. Arg23 is subject to Omega-N-methylarginine. Residues Ser45, Ser113, and Ser134 each carry the phosphoserine modification. Residues Pro157–Gly178 form a disordered region. A compositionally biased stretch (polar residues) spans Ser161–Thr174. Ser203, Ser211, and Ser226 each carry phosphoserine. Lys258 participates in a covalent cross-link: Glycyl lysine isopeptide (Lys-Gly) (interchain with G-Cter in SUMO2). Phosphoserine is present on Ser267. Residues Lys277 and Lys293 each participate in a glycyl lysine isopeptide (Lys-Gly) (interchain with G-Cter in SUMO); alternate cross-link. Glycyl lysine isopeptide (Lys-Gly) (interchain with G-Cter in SUMO2); alternate cross-links involve residues Lys277 and Lys293. Phosphoserine occurs at positions 307 and 404. The nuclear receptor DNA-binding region spans Pro417–Thr492. A Glycyl lysine isopeptide (Lys-Gly) (interchain with G-Cter in ubiquitin) cross-link involves residue Lys418. 2 consecutive NR C4-type zinc fingers follow at residues Cys420–Cys440 and Cys456–Cys480. Lys479, Lys491, Lys493, and Lys494 each carry N6-acetyllysine. Residues Gly484–Lys776 form an interaction with CLOCK region. Positions Asn486–Ala522 are hinge. In terms of domain architecture, NR LBD spans Thr523–Thr757. The tract at residues Pro531 to Leu696 is interaction with CRY1. Residue Lys702 forms a Glycyl lysine isopeptide (Lys-Gly) (interchain with G-Cter in SUMO) linkage.

The protein belongs to the nuclear hormone receptor family. NR3 subfamily. In terms of assembly, heteromultimeric cytoplasmic complex with HSP90AA1, HSPA1A/HSPA1B, and FKBP5 or another immunophilin such as PPID, STIP1, or the immunophilin homolog PPP5C. Upon ligand binding FKBP5 dissociates from the complex and FKBP4 takes its place, thereby linking the complex to dynein and mediating transport to the nucleus, where the complex dissociates. Probably forms a complex composed of chaperones HSP90 and HSP70, co-chaperones CDC37, PPP5C, TSC1 and client protein TSC2, CDK4, AKT, RAF1 and NR3C1; this complex does not contain co-chaperones STIP1/HOP and PTGES3/p23. Directly interacts with UNC45A. Binds to DNA as a homodimer, and as heterodimer with NR3C2 or the retinoid X receptor. Binds STAT5A and STAT5B homodimers and heterodimers. Interacts with NRIP1, POU2F1, POU2F2 and TRIM28. Interacts with several coactivator complexes, including the SMARCA4 complex, CREBBP/EP300, TADA2L (Ada complex) and p160 coactivators such as NCOA2 and NCOA6. Interaction with BAG1 inhibits transactivation. Interacts with HEXIM1 and TGFB1I1. Interacts with NCOA1. Interacts with NCOA3, SMARCA4, SMARCC1, SMARCD1, and SMARCE1. Interacts with CLOCK, CRY1 and CRY2 in a ligand-dependent fashion. Interacts with CIART. Interacts with RWDD3. Interacts with UBE2I/UBC9 and this interaction is enhanced in the presence of RWDD3. Interacts with GRIP1. Interacts with NR4A3 (via nuclear receptor DNA-binding domain), represses transcription activity of NR4A3 on the POMC promoter Nur response element (NurRE). Directly interacts with PNRC2 to attract and form a complex with UPF1 and DCP1A; the interaction leads to rapid mRNA degradation. Interacts with GSK3B. Interacts with FNIP1 and FNIP2. Interacts (via C-terminus) with NR3C1 (via C-terminus). Interacts with MCM3AP. Interacts (via domain NR LBD) with HSP90AA1 and HSP90AB1. In the absence of hormonal ligand, interacts with TACC1. Acetylation by CLOCK reduces its binding to glucocorticoid response elements and its transcriptional activity. Post-translationally, increased proteasome-mediated degradation in response to glucocorticoids. In terms of processing, phosphorylated in the absence of hormone; becomes hyperphosphorylated in the presence of glucocorticoid. The Ser-203, Ser-226 and Ser-404-phosphorylated forms are mainly cytoplasmic, and the Ser-211-phosphorylated form is nuclear. Phosphorylation at Ser-211 increases transcriptional activity. Phosphorylation at Ser-203, Ser-226 and Ser-404 decreases signaling capacity. Phosphorylation at Ser-404 may protect from glucocorticoid-induced apoptosis. Phosphorylation at Ser-203 and Ser-211 is not required in regulation of chromosome segregation. May be dephosphorylated by PPP5C, attenuates NR3C1 action. Sumoylation at Lys-277 and Lys-293 negatively regulates its transcriptional activity. Sumoylation at Lys-702 positively regulates its transcriptional activity in the presence of RWDD3. Sumoylation at Lys-277 and Lys-293 is dispensable whereas sumoylation at Lys-702 is critical for the stimulatory effect of RWDD3 on its transcriptional activity. Heat shock increases sumoylation in a RWDD3-dependent manner. Post-translationally, ubiquitinated by UBR5, leading to its degradation: UBR5 specifically recognizes and binds ligand-bound NR3C1 when it is not associated with coactivators (NCOAs). In presence of NCOAs, the UBR5-degron is not accessible, preventing its ubiquitination and degradation.

Its subcellular location is the cytoplasm. It localises to the nucleus. The protein localises to the mitochondrion. The protein resides in the cytoskeleton. It is found in the spindle. Its subcellular location is the microtubule organizing center. It localises to the centrosome. The protein localises to the chromosome. The protein resides in the nucleoplasm. In terms of biological role, receptor for glucocorticoids (GC). Has a dual mode of action: as a transcription factor that binds to glucocorticoid response elements (GRE), both for nuclear and mitochondrial DNA, and as a modulator of other transcription factors. Affects inflammatory responses, cellular proliferation and differentiation in target tissues. Involved in chromatin remodeling. Plays a role in rapid mRNA degradation by binding to the 5' UTR of target mRNAs and interacting with PNRC2 in a ligand-dependent manner which recruits the RNA helicase UPF1 and the mRNA-decapping enzyme DCP1A, leading to RNA decay. Could act as a coactivator for STAT5-dependent transcription upon growth hormone (GH) stimulation and could reveal an essential role of hepatic GR in the control of body growth. Mediates glucocorticoid-induced apoptosis. Promotes accurate chromosome segregation during mitosis. May act as a tumor suppressor. May play a negative role in adipogenesis through the regulation of lipolytic and antilipogenic gene expression. This is Glucocorticoid receptor (NR3C1) from Tupaia belangeri (Common tree shrew).